The chain runs to 543 residues: Tetrahydroberberine oxidase (543 aa).

The signal sequence occupies residues 1–26 (MIPNSSSSSILSLLVLLLFSTSSSWA). A disulfide bridge connects residues Cys37 and Cys97. Residues Asn54, Asn74, Asn135, Asn142, Asn162, Asn295, Asn335, Asn440, and Asn482 are each glycosylated (N-linked (GlcNAc...) asparagine). Positions 75–250 (STQKPEFIIT…LSWKVKLVPV (176 aa)) constitute an FAD-binding PCMH-type domain. Positions 112 to 175 (HDVEGLSYVS…NTLGFPAGFC (64 aa)) form a cross-link, 6-(S-cysteinyl)-8alpha-(pros-histidyl)-FAD (His-Cys).

It belongs to the oxygen-dependent FAD-linked oxidoreductase family. FAD is required as a cofactor. Post-translationally, the FAD cofactor is bound via a bicovalent 6-S-cysteinyl, 8alpha-N1-histidyl FAD linkage.

It carries out the reaction (S)-canadine + 2 O2 + H(+) = berberine + 2 H2O2. In terms of biological role, catalyzes the oxidation of different tetrahydroprotoberberines, such as (S)-canadine, (S)-scoulerine and (S)-tetrahydropalmatine. In Argemone mexicana (Mexican prickly poppy), this protein is Tetrahydroberberine oxidase.